The following is a 226-amino-acid chain: Prolactin (226 aa).

The N-terminal stretch at 1 to 29 (MNSQGSAQKAGTLLLLLISNLLFCQNVQP) is a signal peptide. C33 and C38 are joined by a disulfide. Residues S53 and S117 each carry the phosphoserine modification. 2 disulfide bridges follow: C85–C201 and C218–C226.

Belongs to the somatotropin/prolactin family. Interacts with PRLR.

It localises to the secreted. Prolactin acts primarily on the mammary gland by promoting lactation. This chain is Prolactin (Prl), found in Mus musculus (Mouse).